Consider the following 313-residue polypeptide: MNQLFGSDKLRLPQRAQAGIAFVRYLIARMNHDRINVNAGYLAYITLLSIVPMLTVLLSILSKFSVFENVGSVLQSFIINNFVPASGDAVHAALQEFIANTGKMTAVGAAFLFVAALMLISNIDKNLNYIWRVKKKRRAVFSFSMYWMVLTLGPILVGASIAATSYITSLRLLDSEAISTVYDQLLRWLPFILSSSAFVGLYLLVPNKKVQFSHAVVGAMIAAVLFELSKKGFAAYITQFPSYQLIYGALAAIPILFVWVYLCWLIVLIGAEVTAALGEREHWRPTEDVIQSLPNNDTELEKDTQRDRFDSES.

6 consecutive transmembrane segments (helical) span residues 41-61 (YLAYITLLSIVPMLTVLLSIL), 104-124 (MTAVGAAFLFVAALMLISNID), 139-159 (AVFSFSMYWMVLTLGPILVGA), 185-205 (LLRWLPFILSSSAFVGLYLLV), 215-235 (AVVGAMIAAVLFELSKKGFAA), and 249-269 (ALAAIPILFVWVYLCWLIVLI). Residues 293–313 (LPNNDTELEKDTQRDRFDSES) form a disordered region. Over residues 299-313 (ELEKDTQRDRFDSES) the composition is skewed to basic and acidic residues.

The protein belongs to the UPF0761 family.

It is found in the cell inner membrane. The sequence is that of UPF0761 membrane protein VV0203 from Vibrio vulnificus (strain YJ016).